Here is a 1164-residue protein sequence, read N- to C-terminus: FH1/FH2 domain-containing protein 1 (1164 aa).

The region spanning 53-458 (AQIPAVHRLL…AAETEKQVAL (406 aa)) is the GBD/FH3 domain. Disordered stretches follow at residues 340-411 (DIEE…VGPP) and 470-500 (MPNE…QSPA). Basic and acidic residues predominate over residues 355–368 (KPSSEEGKRSRRSL). At serine 367 the chain carries Phosphoserine. The span at 402 to 411 (GPASSPVGPP) shows a compositional bias: low complexity. Serine 486 is subject to Phosphoserine. The region spanning 487-615 (PETAPAARTP…LAAPLPHSVP (129 aa)) is the FH1 domain. Threonine 495 bears the Phosphothreonine mark. Phosphoserine occurs at positions 498, 523, and 573. The segment at 566–619 (GKDIPAPSPPLPLLSGVPPPPPLPPPPPIKGPFPPPPPLPLAAPLPHSVPDSSA) is disordered. Positions 571–608 (APSPPLPLLSGVPPPPPLPPPPPIKGPFPPPPPLPLAA) are enriched in pro residues. The tract at residues 612 to 807 (HSVPDSSALP…AEPLFDLKVG (196 aa)) is interaction with ROCK1. In terms of domain architecture, FH2 spans 616 to 1013 (DSSALPTKRK…YRERNKTRGR (398 aa)). Threonine 690 carries the phosphothreonine modification. Positions 884–921 (LTRCAKVDFEQLTENLGQLERRSRAAEESLRSLAKHEL) form a coiled coil. The tract at residues 1020–1143 (KFSGVAGEAP…NRKSLRRTLK (124 aa)) is disordered. Over residues 1028 to 1041 (APSNPSVPVAVSSG) the composition is skewed to low complexity. Positions 1053 to 1133 (MKSLLTSRPE…AARERKRSRG (81 aa)) constitute a DAD domain. Over residues 1073–1089 (MVQSSSPIMPTVGPSTA) the composition is skewed to polar residues. The segment covering 1127–1142 (ERKRSRGNRKSLRRTL) has biased composition (basic residues).

Belongs to the formin homology family. Self-associates via the FH2 domain. Binds to F-actin via its N-terminus. Binds to the cytoplasmic domain of CD21 via its C-terminus. Interacts with ROCK1 in a Src-dependent manner. Post-translationally, phosphorylated by ROCK1. Ubiquitous. Highly expressed in spleen.

It localises to the cytoplasm. The protein localises to the cytoskeleton. The protein resides in the cell projection. Its subcellular location is the bleb. Functionally, required for the assembly of F-actin structures, such as stress fibers. Depends on the Rho-ROCK cascade for its activity. Contributes to the coordination of microtubules with actin fibers and plays a role in cell elongation. Acts synergistically with ROCK1 to promote SRC-dependent non-apoptotic plasma membrane blebbing. The chain is FH1/FH2 domain-containing protein 1 (FHOD1) from Homo sapiens (Human).